A 395-amino-acid chain; its full sequence is Allantoicase (395 aa).

This sequence belongs to the allantoicase family.

The enzyme catalyses allantoate + H2O = (S)-ureidoglycolate + urea. Its pathway is nitrogen metabolism; (S)-allantoin degradation; (S)-ureidoglycolate from allantoate (aminidohydrolase route): step 1/1. Utilization of purines as secondary nitrogen sources, when primary sources are limiting. The chain is Allantoicase (allc) from Danio rerio (Zebrafish).